A 595-amino-acid polypeptide reads, in one-letter code: Trafficking protein particle complex subunit 14 (595 aa).

2 disordered regions span residues 84 to 111 (ASVS…ECVE) and 494 to 513 (SNPP…SSPA).

In terms of assembly, component of the multisubunit TRAPP II complex, which includes at least TRAPPC1, TRAPPC2, TRAPPC2L, TRAPPC3, TRAPPC4, TRAPPC5, TRAPPC6A/B, TRAPPC9, TRAPPC10 and TRAPPC14. TRAPPC9, TRAPPC10 and TRAPPC14 are specific subunits of the TRAPP II complex. Interacts with alpha-tubulin during mitosis.

It is found in the cytoplasm. It localises to the cytoskeleton. Its subcellular location is the spindle. The protein localises to the vesicle. The protein resides in the midbody. In terms of biological role, specific subunit of the TRAPP (transport protein particle) II complex, a highly conserved vesicle tethering complex that functions in late Golgi trafficking as a membrane tether. TRAPP II complex also has GEF activity toward RAB1A. TRAPPC14 is required for ciliogenesis. The polypeptide is Trafficking protein particle complex subunit 14 (trappc14) (Danio rerio (Zebrafish)).